Consider the following 393-residue polypeptide: Dual-specificity RNA methyltransferase RlmN (393 aa).

The active-site Proton acceptor is Glu-114. A Radical SAM core domain is found at 120–359 (EDDRATLCVS…VIVRKTRGDD (240 aa)). An intrachain disulfide couples Cys-127 to Cys-364. Residues Cys-134, Cys-138, and Cys-141 each contribute to the [4Fe-4S] cluster site. Residues 188-189 (GE), Ser-220, 242-244 (SLH), and Asn-321 each bind S-adenosyl-L-methionine. The active-site S-methylcysteine intermediate is Cys-364.

It belongs to the radical SAM superfamily. RlmN family. Requires [4Fe-4S] cluster as cofactor.

The protein localises to the cytoplasm. It catalyses the reaction adenosine(2503) in 23S rRNA + 2 reduced [2Fe-2S]-[ferredoxin] + 2 S-adenosyl-L-methionine = 2-methyladenosine(2503) in 23S rRNA + 5'-deoxyadenosine + L-methionine + 2 oxidized [2Fe-2S]-[ferredoxin] + S-adenosyl-L-homocysteine. The catalysed reaction is adenosine(37) in tRNA + 2 reduced [2Fe-2S]-[ferredoxin] + 2 S-adenosyl-L-methionine = 2-methyladenosine(37) in tRNA + 5'-deoxyadenosine + L-methionine + 2 oxidized [2Fe-2S]-[ferredoxin] + S-adenosyl-L-homocysteine. Specifically methylates position 2 of adenine 2503 in 23S rRNA and position 2 of adenine 37 in tRNAs. m2A2503 modification seems to play a crucial role in the proofreading step occurring at the peptidyl transferase center and thus would serve to optimize ribosomal fidelity. This is Dual-specificity RNA methyltransferase RlmN from Actinobacillus pleuropneumoniae serotype 5b (strain L20).